Consider the following 356-residue polypeptide: Peptide methionine sulfoxide reductase MsrA/MsrB (356 aa).

A peptide methionine sulfoxide reductase A region spans residues H46 to E199. C54 is a catalytic residue. The MsrB domain occupies D216–L339. Catalysis depends on C328, which acts as the Nucleophile.

This sequence in the N-terminal section; belongs to the MsrA Met sulfoxide reductase family. In the C-terminal section; belongs to the MsrB Met sulfoxide reductase family.

It carries out the reaction L-methionyl-[protein] + [thioredoxin]-disulfide + H2O = L-methionyl-(S)-S-oxide-[protein] + [thioredoxin]-dithiol. The catalysed reaction is [thioredoxin]-disulfide + L-methionine + H2O = L-methionine (S)-S-oxide + [thioredoxin]-dithiol. The enzyme catalyses L-methionyl-[protein] + [thioredoxin]-disulfide + H2O = L-methionyl-(R)-S-oxide-[protein] + [thioredoxin]-dithiol. Its function is as follows. Has an important function as a repair enzyme for proteins that have been inactivated by oxidation. Catalyzes the reversible oxidation-reduction of methionine sulfoxide in proteins to methionine. The chain is Peptide methionine sulfoxide reductase MsrA/MsrB (msrAB) from Aggregatibacter actinomycetemcomitans (Actinobacillus actinomycetemcomitans).